Reading from the N-terminus, the 122-residue chain is uncharacterized protein (122 aa).

2 disordered regions span residues 1 to 30 and 96 to 122; these read MGRE…DQPE and FKSC…DAMG.

This is an uncharacterized protein from Homo sapiens (Human).